Reading from the N-terminus, the 339-residue chain is Very-long-chain 3-oxoacyl-CoA reductase (339 aa).

Residues 19–39 (VALFLLSIGGLFTACKLFSFC) traverse the membrane as a helical segment. Leucine 64, lysine 105, aspartate 119, aspartate 127, asparagine 146, tyrosine 213, lysine 217, valine 246, and serine 248 together coordinate NADP(+). Tyrosine 213 functions as the Proton donor in the catalytic mechanism. The Lowers pKa of active site Tyr role is filled by lysine 217.

This sequence belongs to the short-chain dehydrogenases/reductases (SDR) family.

The protein localises to the endoplasmic reticulum membrane. It carries out the reaction a very-long-chain (3R)-3-hydroxyacyl-CoA + NADP(+) = a very-long-chain 3-oxoacyl-CoA + NADPH + H(+). It functions in the pathway lipid metabolism; fatty acid biosynthesis. Functionally, component of the microsomal membrane bound fatty acid elongation system, which produces the 26-carbon very long-chain fatty acids (VLCFA) from palmitate. Catalyzes the reduction of the 3-ketoacyl-CoA intermediate that is formed in each cycle of fatty acid elongation. VLCFAs serve as precursors for ceramide and sphingolipids. The chain is Very-long-chain 3-oxoacyl-CoA reductase from Ajellomyces capsulatus (strain NAm1 / WU24) (Darling's disease fungus).